The chain runs to 293 residues: Phosphatidylcholine-sterol acyltransferase (293 aa).

A glycan (N-linked (GlcNAc...) asparagine) is linked at asparagine 26. The active-site Nucleophile is the serine 123. Asparagine 179 carries N-linked (GlcNAc...) asparagine glycosylation. A disulfide bond links cysteine 220 and cysteine 263. Aspartate 252 serves as the catalytic Charge relay system. Asparagine 280 carries N-linked (GlcNAc...) asparagine glycosylation. Residue histidine 284 is the Charge relay system of the active site.

The protein belongs to the AB hydrolase superfamily. Lipase family.

The protein resides in the secreted. The catalysed reaction is a sterol + a 1,2-diacyl-sn-glycero-3-phosphocholine = a sterol ester + a 1-acyl-sn-glycero-3-phosphocholine. With respect to regulation, APOA1 is the most potent activator in plasma. Also activated by APOE, APOC1 and APOA4. Functionally, central enzyme in the extracellular metabolism of plasma lipoproteins. Synthesized mainly in the liver and secreted into plasma where it converts cholesterol and phosphatidylcholines (lecithins) to cholesteryl esters and lysophosphatidylcholines on the surface of high and low density lipoproteins (HDLs and LDLs). The cholesterol ester is then transported back to the liver. Has a preference for plasma 16:0-18:2 or 18:O-18:2 phosphatidylcholines. Also produced in the brain by primary astrocytes, and esterifies free cholesterol on nascent APOE-containing lipoproteins secreted from glia and influences cerebral spinal fluid (CSF) APOE- and APOA1 levels. Together with APOE and the cholesterol transporter ABCA1, plays a key role in the maturation of glial-derived, nascent lipoproteins. Required for remodeling high-density lipoprotein particles into their spherical forms. The protein is Phosphatidylcholine-sterol acyltransferase (LCAT) of Gerbilliscus gambianus (Gambian gerbil).